Here is a 578-residue protein sequence, read N- to C-terminus: Probable cytochrome c oxidase subunit 1-alpha (578 aa).

A disordered region spans residues 1–21 (MSILNEPQGASAAEDSYENEL). Residues 44–64 (IGTMYLVTSFAFFVIGGVMAL) traverse the membrane as a helical segment. Residue histidine 90 coordinates Fe(II)-heme a. The next 6 membrane-spanning stretches (helical) occupy residues 93–113 (IMLL…IMPL), 125–145 (LNMF…GGFL), 174–194 (LWIM…VNFI), 217–237 (VLLT…ALFA), 262–282 (LFWF…FGIV), and 294–314 (IFGY…SVTV). Cu cation contacts are provided by histidine 268 and tyrosine 272. The 1'-histidyl-3'-tyrosine (His-Tyr) cross-link spans 268–272 (HPEVY). Histidine 317 and histidine 318 together coordinate Cu cation. Transmembrane regions (helical) follow at residues 319 to 339 (MYVT…LIAV) and 363 to 383 (MLWS…GVIL). Position 401 (histidine 401) interacts with heme a3. 3 helical membrane-spanning segments follow: residues 402-422 (FHYV…HFWW), 437-457 (ITFW…HWLG), and 480-500 (ISTI…YNIW). Histidine 403 lines the Fe(II)-heme a pocket.

Belongs to the heme-copper respiratory oxidase family. In terms of assembly, associates with subunits II, III and IV to form cytochrome c oxidase. The cofactor is Cu(2+). Heme is required as a cofactor.

Its subcellular location is the cell membrane. It catalyses the reaction 4 Fe(II)-[cytochrome c] + O2 + 8 H(+)(in) = 4 Fe(III)-[cytochrome c] + 2 H2O + 4 H(+)(out). Its pathway is energy metabolism; oxidative phosphorylation. Functionally, cytochrome c oxidase is the component of the respiratory chain that catalyzes the reduction of oxygen to water. Subunits 1-3 form the functional core of the enzyme complex. CO I is the catalytic subunit of the enzyme. Electrons originating in cytochrome c are transferred via the copper A center of subunit 2 and heme A of subunit 1 to the bimetallic center formed by heme A3 and copper B. This Streptomyces coelicolor (strain ATCC BAA-471 / A3(2) / M145) protein is Probable cytochrome c oxidase subunit 1-alpha (ctaD1).